Reading from the N-terminus, the 208-residue chain is Small ribosomal subunit protein uS4 (208 aa).

The S4 RNA-binding domain maps to 97–160; sequence TRLDNVCYRM…QKQLRVQEAL (64 aa).

This sequence belongs to the universal ribosomal protein uS4 family. Part of the 30S ribosomal subunit. Contacts protein S5. The interaction surface between S4 and S5 is involved in control of translational fidelity.

One of the primary rRNA binding proteins, it binds directly to 16S rRNA where it nucleates assembly of the body of the 30S subunit. In terms of biological role, with S5 and S12 plays an important role in translational accuracy. This chain is Small ribosomal subunit protein uS4, found in Xanthomonas oryzae pv. oryzae (strain MAFF 311018).